Reading from the N-terminus, the 956-residue chain is Kinesin heavy chain isoform 5C (956 aa).

The Kinesin motor domain occupies 8-327; it reads SIKVMCRFRP…LMFGQRAKTI (320 aa). Residues Q87, S89, S90, G91, K92, T93, H94, and K99 each coordinate ATP. The segment at 174–315 is microtubule-binding; it reads VSSPEEVMDV…PSVFNEAETK (142 aa). Phosphothreonine is present on T403. Residues 406–923 are a coiled coil; that stretch reads VDGISAEKEK…RRAHSAQIAK (518 aa). Residues 859–956 are globular; sequence CELPKLEKRL…GSSNSTHYQK (98 aa). The disordered stretch occupies residues 910–956; the sequence is KNMARRAHSAQIAKPIRPGHYPASSPTAVHAVRGGGGGSSNSTHYQK.

Belongs to the TRAFAC class myosin-kinesin ATPase superfamily. Kinesin family. Kinesin subfamily. As to quaternary structure, oligomer composed of two heavy chains and two light chains. Interacts with GRIP1. Interacts with KLC3 and TRAK1. Interacts with ZFYVE27.

The protein resides in the cytoplasm. It is found in the cytoskeleton. It localises to the cell projection. Its subcellular location is the dendrite. It catalyses the reaction ATP + H2O = ADP + phosphate + H(+). Microtubule-associated force-producing protein that may play a role in organelle transport. Has ATPase activity. Involved in synaptic transmission. Mediates dendritic trafficking of mRNAs. Required for anterograde axonal transportation of MAPK8IP3/JIP3 which is essential for MAPK8IP3/JIP3 function in axon elongation. The polypeptide is Kinesin heavy chain isoform 5C (Kif5c) (Mus musculus (Mouse)).